The following is a 291-amino-acid chain: Venom metalloproteinase inhibitor DM43 (291 aa).

Ig-like V-type domains are found at residues Thr22–Ser79 and Gly114–Ala171. Asn23 carries N-linked (GlcNAc...) asparagine glycosylation. 2 cysteine pairs are disulfide-bonded: Cys28–Cys74 and Cys121–Cys163. 3 N-linked (GlcNAc...) asparagine glycosylation sites follow: Asn156, Asn160, and Asn175. An Ig-like V-type 3 domain is found at Pro191–Ser288. An intrachain disulfide couples Cys213 to Cys265.

Homodimer. In terms of processing, N-glycosylated. Blood and milk.

In terms of biological role, metalloproteinase inhibitor. This is Venom metalloproteinase inhibitor DM43 from Didelphis marsupialis (Southern opossum).